A 252-amino-acid polypeptide reads, in one-letter code: Octanoyltransferase (252 aa).

Residues 1–21 (MPSAPAAPAAPAAPDAAASVA) show a composition bias toward low complexity. Residues 1–22 (MPSAPAAPAAPAAPDAAASVAP) are disordered. The BPL/LPL catalytic domain occupies 56-237 (PDTDDEIWVV…RLIAHLDGAT (182 aa)). Substrate contacts are provided by residues 96-103 (RGGQITYH), 168-170 (ALG), and 181-183 (GLS). Residue C199 is the Acyl-thioester intermediate of the active site.

Belongs to the LipB family.

It localises to the cytoplasm. It catalyses the reaction octanoyl-[ACP] + L-lysyl-[protein] = N(6)-octanoyl-L-lysyl-[protein] + holo-[ACP] + H(+). Its pathway is protein modification; protein lipoylation via endogenous pathway; protein N(6)-(lipoyl)lysine from octanoyl-[acyl-carrier-protein]: step 1/2. Functionally, catalyzes the transfer of endogenously produced octanoic acid from octanoyl-acyl-carrier-protein onto the lipoyl domains of lipoate-dependent enzymes. Lipoyl-ACP can also act as a substrate although octanoyl-ACP is likely to be the physiological substrate. This chain is Octanoyltransferase, found in Burkholderia pseudomallei (strain 668).